Reading from the N-terminus, the 481-residue chain is Aspartyl/glutamyl-tRNA(Asn/Gln) amidotransferase subunit B (481 aa).

Belongs to the GatB/GatE family. GatB subfamily. As to quaternary structure, heterotrimer of A, B and C subunits.

The enzyme catalyses L-glutamyl-tRNA(Gln) + L-glutamine + ATP + H2O = L-glutaminyl-tRNA(Gln) + L-glutamate + ADP + phosphate + H(+). It catalyses the reaction L-aspartyl-tRNA(Asn) + L-glutamine + ATP + H2O = L-asparaginyl-tRNA(Asn) + L-glutamate + ADP + phosphate + 2 H(+). Functionally, allows the formation of correctly charged Asn-tRNA(Asn) or Gln-tRNA(Gln) through the transamidation of misacylated Asp-tRNA(Asn) or Glu-tRNA(Gln) in organisms which lack either or both of asparaginyl-tRNA or glutaminyl-tRNA synthetases. The reaction takes place in the presence of glutamine and ATP through an activated phospho-Asp-tRNA(Asn) or phospho-Glu-tRNA(Gln). This is Aspartyl/glutamyl-tRNA(Asn/Gln) amidotransferase subunit B from Prosthecochloris aestuarii (strain DSM 271 / SK 413).